A 251-amino-acid polypeptide reads, in one-letter code: MSEGESKSTHFGYKTVEADKKAELVAGVFHSVAAKYDIMNDVMSFGIHRFWKRHTIEVSGARPGMKVLDLAGGTGDLTAKFSHLVGDKGEVVLADINDSMLKVGRTKLRDKGIVNNVSYVQANAEALPFPDNHFDIITIAFGLRNVTDKDAALRSMNRVLKPGGKLLVLEFSKPQHEIMRKVYDLYSFKVLPKMGELITKDADSYEYLAESIRMHPDQDTLKQMMVDAGFEQVDYTNMTDGIVALHRGYKF.

Residues Thr74, Asp95, and Asn123–Ala124 each bind S-adenosyl-L-methionine.

Belongs to the class I-like SAM-binding methyltransferase superfamily. MenG/UbiE family.

The catalysed reaction is a 2-demethylmenaquinol + S-adenosyl-L-methionine = a menaquinol + S-adenosyl-L-homocysteine + H(+). It carries out the reaction a 2-methoxy-6-(all-trans-polyprenyl)benzene-1,4-diol + S-adenosyl-L-methionine = a 5-methoxy-2-methyl-3-(all-trans-polyprenyl)benzene-1,4-diol + S-adenosyl-L-homocysteine + H(+). It participates in quinol/quinone metabolism; menaquinone biosynthesis; menaquinol from 1,4-dihydroxy-2-naphthoate: step 2/2. The protein operates within cofactor biosynthesis; ubiquinone biosynthesis. Functionally, methyltransferase required for the conversion of demethylmenaquinol (DMKH2) to menaquinol (MKH2) and the conversion of 2-polyprenyl-6-methoxy-1,4-benzoquinol (DDMQH2) to 2-polyprenyl-3-methyl-6-methoxy-1,4-benzoquinol (DMQH2). The protein is Ubiquinone/menaquinone biosynthesis C-methyltransferase UbiE of Shewanella putrefaciens (strain CN-32 / ATCC BAA-453).